The chain runs to 87 residues: uncharacterized protein (87 aa).

To H.pylori HP0495/JHP0447.

This is an uncharacterized protein from Campylobacter jejuni subsp. jejuni serotype O:2 (strain ATCC 700819 / NCTC 11168).